Here is a 512-residue protein sequence, read N- to C-terminus: 2,3-bisphosphoglycerate-independent phosphoglycerate mutase (512 aa).

Mn(2+) is bound by residues Asp-11 and Ser-61. The Phosphoserine intermediate role is filled by Ser-61. Residues His-122, 152–153 (RD), Arg-184, Arg-190, 259–262 (RADR), and Lys-332 each bind substrate. Residues Asp-399, His-403, Asp-440, His-441, and His-459 each contribute to the Mn(2+) site.

Belongs to the BPG-independent phosphoglycerate mutase family. Monomer. It depends on Mn(2+) as a cofactor.

The catalysed reaction is (2R)-2-phosphoglycerate = (2R)-3-phosphoglycerate. The protein operates within carbohydrate degradation; glycolysis; pyruvate from D-glyceraldehyde 3-phosphate: step 3/5. Its function is as follows. Catalyzes the interconversion of 2-phosphoglycerate and 3-phosphoglycerate. In Francisella tularensis subsp. tularensis (strain WY96-3418), this protein is 2,3-bisphosphoglycerate-independent phosphoglycerate mutase.